A 177-amino-acid polypeptide reads, in one-letter code: SAYSvFN domain-containing protein 1 (177 aa).

Over 1-100 (MADFQEQLRQ…CLKYTLWTVY (100 aa)) the chain is Cytoplasmic. Residues 57–70 (SENSQDEAVTSSES) show a composition bias toward polar residues. Positions 57-85 (SENSQDEAVTSSESELVPEEQPTRSTDHH) are disordered. The segment at residues 101-121 (LLFWITLYVIAIKLSFGLVFL) is an intramembrane region (helical). The Cytoplasmic segment spans residues 122-177 (MFSALFGIYFNTRTEPKKRNEMSAYSVFNKNCESIDGTLKAEQFEREIRYGSGSVR).

The protein belongs to the SAYSD1 family.

Its subcellular location is the endoplasmic reticulum membrane. Functionally, ufmylation 'reader' component of a translocation-associated quality control pathway, a mechanism that takes place when a ribosome has stalled during translation, and which is required to degrade clogged substrates. Specifically recognizes and binds ufmylated ribosomes when a ribosome has stalled, promoting the transport of stalled nascent chain to lysosomes for degradation. The polypeptide is SAYSvFN domain-containing protein 1 (Drosophila melanogaster (Fruit fly)).